The sequence spans 545 residues: Ribulokinase (545 aa).

Belongs to the ribulokinase family.

It carries out the reaction D-ribulose + ATP = D-ribulose 5-phosphate + ADP + H(+). It catalyses the reaction L-ribulose + ATP = L-ribulose 5-phosphate + ADP + H(+). The protein operates within carbohydrate degradation; L-arabinose degradation via L-ribulose; D-xylulose 5-phosphate from L-arabinose (bacterial route): step 2/3. This Staphylococcus aureus (strain MRSA252) protein is Ribulokinase.